The following is a 48-amino-acid chain: ATP synthase protein 8 (48 aa).

A helical membrane pass occupies residues 4 to 24 (LVPFFFVNQVVFAFIVLTVLI).

It belongs to the ATPase protein 8 family. In terms of assembly, F-type ATPases have 2 components, CF(1) - the catalytic core - and CF(0) - the membrane proton channel.

Its subcellular location is the mitochondrion membrane. Mitochondrial membrane ATP synthase (F(1)F(0) ATP synthase or Complex V) produces ATP from ADP in the presence of a proton gradient across the membrane which is generated by electron transport complexes of the respiratory chain. F-type ATPases consist of two structural domains, F(1) - containing the extramembraneous catalytic core and F(0) - containing the membrane proton channel, linked together by a central stalk and a peripheral stalk. During catalysis, ATP synthesis in the catalytic domain of F(1) is coupled via a rotary mechanism of the central stalk subunits to proton translocation. Part of the complex F(0) domain. Minor subunit located with subunit a in the membrane. The chain is ATP synthase protein 8 (atp8) from Emericella nidulans (Aspergillus nidulans).